Here is a 94-residue protein sequence, read N- to C-terminus: Co-chaperonin GroES (94 aa).

It belongs to the GroES chaperonin family. In terms of assembly, heptamer of 7 subunits arranged in a ring. Interacts with the chaperonin GroEL.

It localises to the cytoplasm. Together with the chaperonin GroEL, plays an essential role in assisting protein folding. The GroEL-GroES system forms a nano-cage that allows encapsulation of the non-native substrate proteins and provides a physical environment optimized to promote and accelerate protein folding. GroES binds to the apical surface of the GroEL ring, thereby capping the opening of the GroEL channel. The sequence is that of Co-chaperonin GroES from Finegoldia magna (strain ATCC 29328 / DSM 20472 / WAL 2508) (Peptostreptococcus magnus).